Here is a 249-residue protein sequence, read N- to C-terminus: uncharacterized protein (249 aa).

This sequence belongs to the ycf73 family.

The protein resides in the plastid. It localises to the chloroplast. This is an uncharacterized protein from Oryza sativa (Rice).